A 412-amino-acid chain; its full sequence is Burnettramic acids biosynthesis cluster protein E (412 aa).

3 disordered regions span residues 1–66 (MAIA…KKIR), 308–342 (RNPT…SLAT), and 386–412 (SRAE…AAKG). Positions 36–58 (EDEQWALDELQDELCQEEPSDSE) are enriched in acidic residues. Positions 395–404 (EATTEPSVQS) are enriched in polar residues.

Its pathway is mycotoxin biosynthesis. In terms of biological role, part of the gene cluster that mediates the biosynthesis of burnettramic acids, an unusual class of bolaamphiphilic pyrrolizidinediones that display potent antibacterial, antifungal, and cytotoxic activities. The first step of the biosynthesis of burnettramic acids is the hydroxylation of proline by the proline hydroxylase buaE to generate 4-hydroxyproline. The PKS-NRPS buaA and trans-enoyl reductase buaC construct the highly reduced polyketide chain, and the condensation (C) domain of buaA then catalyzes the amide bond formation with the activated 4-hydroxyproline. This is followed by the R domain releasing the nascent polyketide-peptide directly via a Dieckmann condensation to afford a tetramic acid fused to the hydroxyproline, generating the bicyclic pyrrolidinedione moiety. The cytochrome P450 monooxygenases buaD and buaG are likely responsible for the multiple hydroxylations on the polyketide chain and its terminus, although in the heterologous context, buaD does not appear to be required. Therefore, while buaG may be a multifunctional cytochrome P450 monooxygenase, it cannot be ruled out that the two secondary alcohols on the polyketide chain could have an acetate origin. Finally, the glycosyltransferase buaB transfers beta-D-mannose to the aglycone burnettramic acid A to form burnettramic acid A. Burnettramic acid B is a minor cis-pyrrolizidine epimer of burnettramic acid A and it is likely that small amounts of it form naturally in acidic environments. The role of the uncharacterized protein buaF in the biosynthesis of burnettramic acids has still to be determined. The protein is Burnettramic acids biosynthesis cluster protein E of Petromyces alliaceus (Aspergillus alliaceus).